A 296-amino-acid chain; its full sequence is Polyamine aminopropyltransferase (296 aa).

A PABS domain is found at 5–238 (ELWYETLHAN…GIMTFAWATQ (234 aa)). Glutamine 33 is an S-methyl-5'-thioadenosine binding site. Residues histidine 64 and aspartate 88 each contribute to the spermidine site. S-methyl-5'-thioadenosine contacts are provided by residues glutamate 108 and 140 to 141 (DG). The Proton acceptor role is filled by aspartate 158. Residue 158–161 (DCTD) participates in spermidine binding. Position 165 (proline 165) interacts with S-methyl-5'-thioadenosine.

It belongs to the spermidine/spermine synthase family. As to quaternary structure, homodimer or homotetramer.

It is found in the cytoplasm. The catalysed reaction is S-adenosyl 3-(methylsulfanyl)propylamine + putrescine = S-methyl-5'-thioadenosine + spermidine + H(+). The protein operates within amine and polyamine biosynthesis; spermidine biosynthesis; spermidine from putrescine: step 1/1. Functionally, catalyzes the irreversible transfer of a propylamine group from the amino donor S-adenosylmethioninamine (decarboxy-AdoMet) to putrescine (1,4-diaminobutane) to yield spermidine. The sequence is that of Polyamine aminopropyltransferase from Yersinia pseudotuberculosis serotype O:1b (strain IP 31758).